We begin with the raw amino-acid sequence, 110 residues long: Large ribosomal subunit protein uL22 (110 aa).

This sequence belongs to the universal ribosomal protein uL22 family. Part of the 50S ribosomal subunit.

Functionally, this protein binds specifically to 23S rRNA; its binding is stimulated by other ribosomal proteins, e.g. L4, L17, and L20. It is important during the early stages of 50S assembly. It makes multiple contacts with different domains of the 23S rRNA in the assembled 50S subunit and ribosome. Its function is as follows. The globular domain of the protein is located near the polypeptide exit tunnel on the outside of the subunit, while an extended beta-hairpin is found that lines the wall of the exit tunnel in the center of the 70S ribosome. This Pseudomonas aeruginosa (strain LESB58) protein is Large ribosomal subunit protein uL22.